The chain runs to 208 residues: FMN-dependent NADH:quinone oxidoreductase 2 (208 aa).

It belongs to the azoreductase type 1 family. Homodimer. It depends on FMN as a cofactor.

It catalyses the reaction 2 a quinone + NADH + H(+) = 2 a 1,4-benzosemiquinone + NAD(+). The catalysed reaction is N,N-dimethyl-1,4-phenylenediamine + anthranilate + 2 NAD(+) = 2-(4-dimethylaminophenyl)diazenylbenzoate + 2 NADH + 2 H(+). In terms of biological role, quinone reductase that provides resistance to thiol-specific stress caused by electrophilic quinones. Functionally, also exhibits azoreductase activity. Catalyzes the reductive cleavage of the azo bond in aromatic azo compounds to the corresponding amines. In Bacillus cereus (strain ATCC 10987 / NRS 248), this protein is FMN-dependent NADH:quinone oxidoreductase 2.